A 381-amino-acid polypeptide reads, in one-letter code: Putative MgpC-like protein MPN_503 (381 aa).

The tract at residues M1–S109 is disordered. Residues E13–P31 are compositionally biased toward polar residues. Composition is skewed to basic and acidic residues over residues K40 to N51 and D61 to G73. A compositionally biased stretch (polar residues) spans V89–S109.

It belongs to the MgpC family.

The chain is Putative MgpC-like protein MPN_503 from Mycoplasma pneumoniae (strain ATCC 29342 / M129 / Subtype 1) (Mycoplasmoides pneumoniae).